We begin with the raw amino-acid sequence, 559 residues long: Dihydroxy-acid dehydratase 2 (559 aa).

A [2Fe-2S] cluster-binding site is contributed by Cys53. Residue Asp85 coordinates Mg(2+). Cys126 contributes to the [2Fe-2S] cluster binding site. Asp127 and Lys128 together coordinate Mg(2+). At Lys128 the chain carries N6-carboxylysine. Residue Cys195 participates in [2Fe-2S] cluster binding. Position 446 (Glu446) interacts with Mg(2+). Residue Ser472 is the Proton acceptor of the active site.

The protein belongs to the IlvD/Edd family. Homodimer. [2Fe-2S] cluster is required as a cofactor. It depends on Mg(2+) as a cofactor.

It catalyses the reaction (2R)-2,3-dihydroxy-3-methylbutanoate = 3-methyl-2-oxobutanoate + H2O. The enzyme catalyses (2R,3R)-2,3-dihydroxy-3-methylpentanoate = (S)-3-methyl-2-oxopentanoate + H2O. Its pathway is amino-acid biosynthesis; L-isoleucine biosynthesis; L-isoleucine from 2-oxobutanoate: step 3/4. It participates in amino-acid biosynthesis; L-valine biosynthesis; L-valine from pyruvate: step 3/4. Functionally, functions in the biosynthesis of branched-chain amino acids. Catalyzes the dehydration of (2R,3R)-2,3-dihydroxy-3-methylpentanoate (2,3-dihydroxy-3-methylvalerate) into 2-oxo-3-methylpentanoate (2-oxo-3-methylvalerate) and of (2R)-2,3-dihydroxy-3-methylbutanoate (2,3-dihydroxyisovalerate) into 2-oxo-3-methylbutanoate (2-oxoisovalerate), the penultimate precursor to L-isoleucine and L-valine, respectively. The polypeptide is Dihydroxy-acid dehydratase 2 (Pseudoalteromonas translucida (strain TAC 125)).